Consider the following 1385-residue polypeptide: Kinesin-like protein KIF15 (1385 aa).

The disordered stretch occupies residues 1–24 (MAPGCKSELRNVTNSHSNQPSNED). Residues 10 to 21 (RNVTNSHSNQPS) show a composition bias toward polar residues. Residues 26–363 (AIKVFVRIRP…LNFAQRAKLI (338 aa)) enclose the Kinesin motor domain. 109–116 (GQTGSGKT) is a binding site for ATP. Residues 368 to 1385 (VVNEDTQGNV…NVFLKERKKE (1018 aa)) adopt a coiled-coil conformation. Position 1007 is an N6-acetyllysine (Lys-1007). Phosphoserine is present on residues Ser-1139 and Ser-1167. Positions 1222–1243 (DMKRQGESSSQSRPDSQQLKNE) are disordered. Polar residues predominate over residues 1228 to 1241 (ESSSQSRPDSQQLK).

The protein belongs to the TRAFAC class myosin-kinesin ATPase superfamily. Kinesin family. KLP2 subfamily. As to quaternary structure, interacts with MKI67 and TPX2. As to expression, expressed in sympathetic neurons.

It is found in the cytoplasm. The protein localises to the cytoskeleton. The protein resides in the spindle. Plus-end directed kinesin-like motor enzyme involved in mitotic spindle assembly. The sequence is that of Kinesin-like protein KIF15 (Kif15) from Rattus norvegicus (Rat).